The sequence spans 799 residues: Heat shock protein 90-6, mitochondrial (799 aa).

Residues 1–48 (MIRLSKRSVSTLLRSGNQSFRIAAAASTSRSSPSATDVKRSDTESRWY) constitute a mitochondrion transit peptide. Over residues 23–35 (AAAASTSRSSPSA) the composition is skewed to low complexity. The interval 23–61 (AAAASTSRSSPSATDVKRSDTESRWYSSLTNGQSKNSGS) is disordered. Residues 46–61 (RWYSSLTNGQSKNSGS) are compositionally biased toward polar residues. Residues Glu124, Asn128, Asp170, Met175, 190 to 191 (SG), 214 to 219 (QFGVGF), and Thr269 contribute to the ATP site. The segment at 314–337 (EVEVEDDPTETKKDDQDDQTEKKK) is disordered. The segment covering 322 to 334 (TETKKDDQDDQTE) has biased composition (basic and acidic residues). Arg464 is an ATP binding site. A compositionally biased stretch (polar residues) spans 766–777 (SPEVQPQQQQMA). The interval 766–799 (SPEVQPQQQQMAHSHDAETFEAEVVEPVEVDGKK) is disordered. Acidic residues predominate over residues 784–799 (TFEAEVVEPVEVDGKK).

It belongs to the heat shock protein 90 family. Interacts with P23-1.

It is found in the mitochondrion. In terms of biological role, molecular chaperone which stabilizes unfolding protein intermediates and functions as a folding molecular chaperone that assists the non-covalent folding of proteins in an ATP-dependent manner. In Arabidopsis thaliana (Mouse-ear cress), this protein is Heat shock protein 90-6, mitochondrial.